Here is a 609-residue protein sequence, read N- to C-terminus: Glutamine--fructose-6-phosphate aminotransferase [isomerizing] (609 aa).

Catalysis depends on cysteine 2, which acts as the Nucleophile; for GATase activity. The 217-residue stretch at 2 to 218 (CGIVGAIAQR…EGDIAEITRR (217 aa)) folds into the Glutamine amidotransferase type-2 domain. 2 SIS domains span residues 286–426 (ADEL…LKGL) and 458–599 (LAED…VDQP). Lysine 604 (for Fru-6P isomerization activity) is an active-site residue.

As to quaternary structure, homodimer. In pull-down experiments interacts with CedA.

The protein resides in the cytoplasm. It catalyses the reaction D-fructose 6-phosphate + L-glutamine = D-glucosamine 6-phosphate + L-glutamate. Functionally, catalyzes the first step in hexosamine metabolism, converting fructose-6P into glucosamine-6P using glutamine as a nitrogen source. The protein is Glutamine--fructose-6-phosphate aminotransferase [isomerizing] (glmS) of Escherichia coli (strain K12).